Reading from the N-terminus, the 230-residue chain is Protein-L-isoaspartate O-methyltransferase (230 aa).

S65 is a catalytic residue.

Belongs to the methyltransferase superfamily. L-isoaspartyl/D-aspartyl protein methyltransferase family. As to quaternary structure, monomer. As to expression, highest contents in seeds.

It is found in the cytoplasm. The enzyme catalyses [protein]-L-isoaspartate + S-adenosyl-L-methionine = [protein]-L-isoaspartate alpha-methyl ester + S-adenosyl-L-homocysteine. Functionally, catalyzes the methyl esterification of L-isoaspartyl residues in peptides and proteins that result from spontaneous decomposition of normal L-aspartyl and L-asparaginyl residues. It plays a role in the repair and/or degradation of damaged proteins. This enzyme does not act on D-aspartyl residues. The polypeptide is Protein-L-isoaspartate O-methyltransferase (PCM) (Triticum aestivum (Wheat)).